A 245-amino-acid polypeptide reads, in one-letter code: Phycocyanobilin:ferredoxin oxidoreductase (245 aa).

Belongs to the HY2 family.

The catalysed reaction is (2R,3Z)-phycocyanobilin + 4 oxidized [2Fe-2S]-[ferredoxin] = biliverdin IXalpha + 4 reduced [2Fe-2S]-[ferredoxin] + 4 H(+). Catalyzes the four-electron reduction of biliverdin IX-alpha (2-electron reduction at both the A and D rings); the reaction proceeds via an isolatable 2-electron intermediate, 181,182-dihydrobiliverdin. This Nostoc punctiforme (strain ATCC 29133 / PCC 73102) protein is Phycocyanobilin:ferredoxin oxidoreductase (pcyA).